A 415-amino-acid chain; its full sequence is Serine/threonine transporter SstT (415 aa).

8 helical membrane-spanning segments follow: residues 23–43, 47–67, 85–105, 144–164, 181–201, 220–240, 293–313, and 333–353; these read ILIG…AAIA, LGTL…LMLV, ILFL…LFSF, ALLN…GFAL, AVTF…FGLV, LLVL…LLVF, IPLG…VLTL, and VVAS…LLLI.

The protein belongs to the dicarboxylate/amino acid:cation symporter (DAACS) (TC 2.A.23) family.

The protein resides in the cell inner membrane. The enzyme catalyses L-serine(in) + Na(+)(in) = L-serine(out) + Na(+)(out). It carries out the reaction L-threonine(in) + Na(+)(in) = L-threonine(out) + Na(+)(out). Its function is as follows. Involved in the import of serine and threonine into the cell, with the concomitant import of sodium (symport system). The protein is Serine/threonine transporter SstT of Klebsiella pneumoniae subsp. pneumoniae (strain ATCC 700721 / MGH 78578).